Consider the following 66-residue polypeptide: Large ribosomal subunit protein uL30 (66 aa).

It belongs to the universal ribosomal protein uL30 family. Part of the 50S ribosomal subunit.

The protein is Large ribosomal subunit protein uL30 of Azorhizobium caulinodans (strain ATCC 43989 / DSM 5975 / JCM 20966 / LMG 6465 / NBRC 14845 / NCIMB 13405 / ORS 571).